The primary structure comprises 454 residues: tRNA modification GTPase MnmE (454 aa).

Arg-23, Glu-80, and Lys-120 together coordinate (6S)-5-formyl-5,6,7,8-tetrahydrofolate. One can recognise a TrmE-type G domain in the interval 216 to 377; that stretch reads GMKVVIAGRP…LRDHLKQSMG (162 aa). Asn-226 is a binding site for K(+). Residues 226-231, 245-251, 270-273, 335-338, and 358-360 contribute to the GTP site; these read NAGKSS, TDIAGTT, DTAG, NKAD, and SAR. A Mg(2+)-binding site is contributed by Ser-230. K(+) is bound by residues Thr-245, Ile-247, and Thr-250. Position 251 (Thr-251) interacts with Mg(2+). Lys-454 contacts (6S)-5-formyl-5,6,7,8-tetrahydrofolate.

This sequence belongs to the TRAFAC class TrmE-Era-EngA-EngB-Septin-like GTPase superfamily. TrmE GTPase family. Homodimer. Heterotetramer of two MnmE and two MnmG subunits. Requires K(+) as cofactor.

The protein localises to the cytoplasm. Exhibits a very high intrinsic GTPase hydrolysis rate. Involved in the addition of a carboxymethylaminomethyl (cmnm) group at the wobble position (U34) of certain tRNAs, forming tRNA-cmnm(5)s(2)U34. This Yersinia pseudotuberculosis serotype IB (strain PB1/+) protein is tRNA modification GTPase MnmE.